Here is a 4662-residue protein sequence, read N- to C-terminus: Protein PF3D7_1417600 (4662 aa).

The next 2 helical transmembrane spans lie at 136–156 (INYVFLQIIYNIILYFVYLYI) and 161–181 (YIYYILRTYLFLLLYNSFHII). One copy of the LRR 1 repeat lies at 466-489 (IKNIDSINKNHKRLIKISNYNITN). Residues 583-710 (YRNDGDVNNK…KMKPDNTLNE (128 aa)) are disordered. Residues 590 to 644 (NNKNGYNNNEHSNSSNERSNNNGDNNNNNHNNNNHNNNHHNNGSNNHNGNNNSNN) are compositionally biased toward low complexity. Residues 650 to 666 (DDDKKGNDKKNEDKDDE) show a composition bias toward basic and acidic residues. Basic residues predominate over residues 690-701 (KKRKEKSKNKNK). The HSA domain occupies 783-856 (YKPTEPVNIF…ISNDIKMFWF (74 aa)). The segment at 942–967 (GLMNKMSHQNGKNNNHNDYNNKCEDN) is disordered. The stretch at 1150-1172 (NVHINHIQYDDNNLYYNDDLYNY) is one LRR 2 repeat. The segment covering 1505-1524 (NNNNNSNNNNSNSNNNSNSN) has biased composition (low complexity). Disordered stretches follow at residues 1505-1540 (NNNNNSNNNNSNSNNNSNSNIKTKESVSTTNHNNSS) and 1705-1761 (KINS…NEKD). A compositionally biased stretch (basic and acidic residues) spans 1710 to 1761 (NNDKSDDKNDDKNDKKNDGKNDKNDEKDDNKTGEKGDNKIGEKDDNKINEKD). LRR repeat units follow at residues 2063 to 2086 (ITKVKFLPLFSSNNVNKLIGMFNK) and 2129 to 2153 (DEEINILNKNDDKINEYKDELNVKD). Positions 2228-2261 (KNKSNKKKRAKKNIKLGEEENESECNNEGECNNE) are disordered. A compositionally biased stretch (basic residues) spans 2230–2241 (KSNKKKRAKKNI). The segment covering 2246–2261 (EENESECNNEGECNNE) has biased composition (acidic residues). LRR repeat units follow at residues 2672–2695 (LDKLKNFPINESIESSKNNNKTID), 2773–2796 (NTVLKDTIIESNEISCIVDKTVDI), 2864–2888 (INDDNKMNNFVNNNITHINNNVNNN), and 2904–2929 (ANNINNLNVNHLNNNISQINNNYNNS). The tract at residues 2956–2975 (MNNTKQRSHSSYHTSFPMQN) is disordered. LRR repeat units lie at residues 3377–3400 (QNNMNTINMNNINMNNINMNNITM), 3438–3461 (NNSMNNINISNNINYNISNNYNNS), 3756–3781 (SQRLQNIHLGNQQNDIQHMNLDNINN), 3935–3960 (QPNINNVGMNQPNINNVGMNQPNINN), 3965–3985 (QPNINNVGMNQPNINNVSMNQ), and 3986–4010 (PNINNVNMNQPNINNVSMNQPNINN). The stretch at 4203-4272 (DMNQQERLQQ…ERLQQKWEQQ (70 aa)) forms a coiled coil. 2 LRR repeats span residues 4296-4321 (YQELNNHTLQENTIAKDSMRQHIFLK) and 4333-4357 (QKMHSHQLQTEKMKTQQLSAHSLQQ). The segment at 4384–4412 (QMNHQQINKHQMNQQQMNKQQMNQQQINQ) is disordered.

It is found in the membrane. The protein is Protein PF3D7_1417600 of Plasmodium falciparum (isolate 3D7).